The following is a 44-amino-acid chain: Thymosin beta-4 (44 aa).

Residues 1-25 (MSDKPDMAEIEKFDKSKLKKTETQE) show a composition bias toward basic and acidic residues. A disordered region spans residues 1-44 (MSDKPDMAEIEKFDKSKLKKTETQEKNPLPSKETIEQEKQAGES). Serine 2 is subject to N-acetylserine. Phosphoserine is present on serine 2. Residue lysine 4 is modified to N6-acetyllysine. Residue lysine 12 is modified to N6-acetyllysine; alternate. A Glycyl lysine isopeptide (Lys-Gly) (interchain with G-Cter in SUMO2); alternate cross-link involves residue lysine 12. The residue at position 23 (threonine 23) is a Phosphothreonine. Lysine 26 is subject to N6-acetyllysine. Residue serine 31 is modified to Phosphoserine. Lysine 32 is subject to N6-acetyllysine. Positions 33–44 (ETIEQEKQAGES) are enriched in basic and acidic residues. Residue threonine 34 is modified to Phosphothreonine. Residue lysine 39 is modified to N6-acetyllysine.

Belongs to the thymosin beta family. In terms of assembly, identified in a complex composed of ACTA1, COBL, GSN AND TMSB4X. Interacts with SERPINB1. AcSDKP is inactivated by ACE, which removes the dipeptide Lys-Pro from its C-terminus.

The protein resides in the cytoplasm. Its subcellular location is the cytoskeleton. In terms of biological role, plays an important role in the organization of the cytoskeleton. Binds to and sequesters actin monomers (G actin) and therefore inhibits actin polymerization. Functionally, potent inhibitor of bone marrow derived stem cell differentiation. Acts by inhibits the entry of hematopoietic pluripotent stem cells into the S-phase. The protein is Thymosin beta-4 (TMSB4) of Bos taurus (Bovine).